Consider the following 1265-residue polypeptide: 1-phosphatidylinositol 4,5-bisphosphate phosphodiesterase gamma-2 (1265 aa).

Residues 20 to 131 (RALELGTVMT…WLSGLKILHQ (112 aa)) form the PH domain. Positions 312–456 (QDMNNPLSHY…LREKIIIKHK (145 aa)) constitute a PI-PLC X-box domain. Residues His327 and His372 contribute to the active site. 2 consecutive SH2 domains span residues 532–635 (WFHK…TDPV) and 646–735 (WYYD…RYPV). Phosphotyrosine; by BTK is present on residues Tyr753 and Tyr759. The SH3 domain occupies 769-829 (MPQRTVKALY…PSNYVEDISA (61 aa)). The PI-PLC Y-box domain occupies 930–1044 (LSDLVVYCKP…GYVLQPESMR (115 aa)). Residues 1038–1169 (LQPESMRSEK…SGFRSVPLKN (132 aa)) form the C2 domain. The residue at position 1197 (Tyr1197) is a Phosphotyrosine; by BTK. Tyr1217 and Tyr1245 each carry phosphotyrosine.

As to quaternary structure, part of a complex composed of EEIG1, TNFRSF11A/RANK, PLCG2, GAB2, TEC and BTK; complex formation increases in the presence of TNFSF11/RANKL. Interacts (via SH2 domain) with CSF1R (tyrosine phosphorylated). Interacts constitutively with THEMIS2. The cofactor is Ca(2+). In terms of processing, phosphorylated on tyrosine residues by CSF1R. Phosphorylated on tyrosine residues by BTK and SYK; upon ligand-induced activation of a variety of growth factor receptors and immune system receptors. Phosphorylation leads to increased phospholipase activity.

The protein localises to the membrane raft. It carries out the reaction a 1,2-diacyl-sn-glycero-3-phospho-(1D-myo-inositol-4,5-bisphosphate) + H2O = 1D-myo-inositol 1,4,5-trisphosphate + a 1,2-diacyl-sn-glycerol + H(+). Its function is as follows. The production of the second messenger molecules diacylglycerol (DAG) and inositol 1,4,5-trisphosphate (IP3) is mediated by activated phosphatidylinositol-specific phospholipase C enzymes. It is a crucial enzyme in transmembrane signaling. This chain is 1-phosphatidylinositol 4,5-bisphosphate phosphodiesterase gamma-2, found in Rattus norvegicus (Rat).